A 539-amino-acid polypeptide reads, in one-letter code: Chaperonin GroEL (539 aa).

Residues 29 to 32 (TLGP), 86 to 90 (DGTTT), G412, 475 to 477 (NAA), and D491 each bind ATP.

The protein belongs to the chaperonin (HSP60) family. In terms of assembly, forms a cylinder of 14 subunits composed of two heptameric rings stacked back-to-back. Interacts with the co-chaperonin GroES.

The protein resides in the cytoplasm. The catalysed reaction is ATP + H2O + a folded polypeptide = ADP + phosphate + an unfolded polypeptide.. Its function is as follows. Together with its co-chaperonin GroES, plays an essential role in assisting protein folding. The GroEL-GroES system forms a nano-cage that allows encapsulation of the non-native substrate proteins and provides a physical environment optimized to promote and accelerate protein folding. The sequence is that of Chaperonin GroEL from Tsukamurella tyrosinosolvens.